The following is an 87-amino-acid chain: Small ribosomal subunit protein bS18 (87 aa).

It belongs to the bacterial ribosomal protein bS18 family. In terms of assembly, part of the 30S ribosomal subunit. Forms a tight heterodimer with protein bS6.

Its function is as follows. Binds as a heterodimer with protein bS6 to the central domain of the 16S rRNA, where it helps stabilize the platform of the 30S subunit. In Mesomycoplasma hyopneumoniae (strain 232) (Mycoplasma hyopneumoniae), this protein is Small ribosomal subunit protein bS18.